The chain runs to 194 residues: Adenylate kinase (194 aa).

12-17 (GSGKTT) lines the ATP pocket. The segment at 34 to 63 (STGDLLREEVKKGTPLGATIASFIDNGQLV) is NMP. AMP-binding positions include threonine 35, arginine 40, 61–63 (QLV), 88–91 (GFPR), and glutamine 95. The interval 130–136 (GRARGAD) is LID. Arginine 131 contributes to the ATP binding site. Residues arginine 133 and arginine 145 each coordinate AMP. Residue arginine 173 coordinates ATP.

This sequence belongs to the adenylate kinase family. In terms of assembly, monomer.

The protein localises to the cytoplasm. It catalyses the reaction AMP + ATP = 2 ADP. It participates in purine metabolism; AMP biosynthesis via salvage pathway; AMP from ADP: step 1/1. In terms of biological role, catalyzes the reversible transfer of the terminal phosphate group between ATP and AMP. Plays an important role in cellular energy homeostasis and in adenine nucleotide metabolism. In Nitratiruptor sp. (strain SB155-2), this protein is Adenylate kinase.